Consider the following 537-residue polypeptide: Beta-arabinofuranosyltransferase RAY1 (537 aa).

A DXD motif motif is present at residues 370–372 (DVD).

It belongs to the glycosyltransferase 77 family.

Beta-arabinofuranosyltransferase that transfers specifically an arabinosyl residue from UDP-arabinofuranose to the monosaccharide galactose or beta-methyl-galactoside in vitro. Catalyzes the addition of a beta-arabinofuranose residue onto a beta-galactosyl residue of an Yariv-precipitable wall polymer in vivo. This is Beta-arabinofuranosyltransferase RAY1 from Arabidopsis thaliana (Mouse-ear cress).